Here is an 85-residue protein sequence, read N- to C-terminus: Cell division topological specificity factor (85 aa).

The protein belongs to the MinE family.

Functionally, prevents the cell division inhibition by proteins MinC and MinD at internal division sites while permitting inhibition at polar sites. This ensures cell division at the proper site by restricting the formation of a division septum at the midpoint of the long axis of the cell. The sequence is that of Cell division topological specificity factor from Deinococcus geothermalis (strain DSM 11300 / CIP 105573 / AG-3a).